We begin with the raw amino-acid sequence, 183 residues long: Inosine/xanthosine triphosphatase (183 aa).

The protein belongs to the YjjX NTPase family. Homodimer. Mg(2+) serves as cofactor. Requires Mn(2+) as cofactor.

It catalyses the reaction XTP + H2O = XDP + phosphate + H(+). The catalysed reaction is ITP + H2O = IDP + phosphate + H(+). Phosphatase that hydrolyzes non-canonical purine nucleotides such as XTP and ITP to their respective diphosphate derivatives. Probably excludes non-canonical purines from DNA/RNA precursor pool, thus preventing their incorporation into DNA/RNA and avoiding chromosomal lesions. This Vibrio cholerae serotype O1 (strain ATCC 39315 / El Tor Inaba N16961) protein is Inosine/xanthosine triphosphatase.